The chain runs to 289 residues: (3R)-3-[(carboxymethyl)amino]fatty acid oxygenase/decarboxylase (289 aa).

The a (3R)-3-[(carboxymethyl)amino]fatty acid site is built by Tyr65, Tyr70, and Gly93. Residues His97 and Asp99 each contribute to the Fe(2+) site. A (3R)-3-[(carboxymethyl)amino]fatty acid-binding residues include Tyr100 and Lys158. His260 contacts Fe(2+). Position 264 (His264) interacts with 2-oxoglutarate. Position 275 (Arg275) interacts with a (3R)-3-[(carboxymethyl)amino]fatty acid.

It belongs to the TfdA dioxygenase family. The cofactor is Fe(2+).

It catalyses the reaction a (3R)-3-[(carboxymethyl)amino]fatty acid + 2 2-oxoglutarate + 2 O2 = a (3R)-3-isocyanyl-fatty acid + 2 succinate + 3 CO2 + 2 H2O. It carries out the reaction a (3R)-3-[(carboxymethyl)amino]fatty acid + 2-oxoglutarate + O2 = a (3R)-3-{[carboxy(hydroxy)methyl]amino}fatty acid + succinate + CO2. The enzyme catalyses a (3R)-3-{[carboxy(hydroxy)methyl]amino}fatty acid + 2-oxoglutarate + O2 = a (3R)-3-isocyanyl-fatty acid + succinate + 2 CO2 + 2 H2O. Involved in the biosynthesis of a unique class of isonitrile lipopeptides (INLPs) that seem to play a role in metal acquisition. Catalyzes the conversion of (3R)-3-[(carboxymethyl)amino]fatty acids to (3R)-3-isocyanyl-fatty acids through an oxidative decarboxylation mechanism, thereby generating the isonitrile group of INLPs. The polypeptide is (3R)-3-[(carboxymethyl)amino]fatty acid oxygenase/decarboxylase (Mycobacterium bovis (strain ATCC BAA-935 / AF2122/97)).